A 443-amino-acid polypeptide reads, in one-letter code: Proline--tRNA ligase (443 aa).

The protein belongs to the class-II aminoacyl-tRNA synthetase family. ProS type 2 subfamily. As to quaternary structure, homodimer.

The protein localises to the cytoplasm. It catalyses the reaction tRNA(Pro) + L-proline + ATP = L-prolyl-tRNA(Pro) + AMP + diphosphate. Its function is as follows. Catalyzes the attachment of proline to tRNA(Pro) in a two-step reaction: proline is first activated by ATP to form Pro-AMP and then transferred to the acceptor end of tRNA(Pro). This Zymomonas mobilis subsp. mobilis (strain ATCC 31821 / ZM4 / CP4) protein is Proline--tRNA ligase.